The chain runs to 244 residues: Nonsense-mediated decay protein 4 (244 aa).

Its subcellular location is the cytoplasm. Involved in nonsense-mediated decay of mRNAs containing premature stop codons. In Kluyveromyces lactis (strain ATCC 8585 / CBS 2359 / DSM 70799 / NBRC 1267 / NRRL Y-1140 / WM37) (Yeast), this protein is Nonsense-mediated decay protein 4 (NMD4).